A 611-amino-acid polypeptide reads, in one-letter code: Leukotriene A-4 hydrolase (611 aa).

An N6-acetyllysine modification is found at Lys73. A peptide contacts are provided by residues 135–137 and 267–272; these read QCQ and SYGGME. His296 contributes to the Zn(2+) binding site. Residue Glu297 is the Proton acceptor of the active site. 2 residues coordinate Zn(2+): His300 and Glu319. Lys337 bears the N6-acetyllysine mark. Catalysis depends on Tyr384, which acts as the Proton donor. Lys414 is subject to N6-acetyllysine. Ser416 bears the Phosphoserine mark. 564–566 contributes to the a peptide binding site; it reads RMK. An N6-acetyllysine modification is found at Lys573.

This sequence belongs to the peptidase M1 family. In terms of assembly, monomer. Requires Zn(2+) as cofactor. In terms of processing, phosphorylation at Ser-416 inhibits leukotriene-A4 hydrolase activity. activity.

It is found in the cytoplasm. The enzyme catalyses leukotriene A4 + H2O = leukotriene B4. It catalyses the reaction (5S,6S)-epoxy-(18R)-hydroxy-(7E,9E,11Z,14Z,16E)-eicosapentaenoate + H2O = resolvin E1. The catalysed reaction is (5S,6S)-epoxy-(18S)-hydroxy-(7E,9E,11Z,14Z,16E)-eicosapentaenoate + H2O = 18S-resolvin E1. It carries out the reaction Release of the N-terminal residue from a tripeptide.. The protein operates within lipid metabolism; leukotriene B4 biosynthesis. Inhibited by bestatin. The epoxide hydrolase activity is restrained by suicide inactivation that involves binding of LTA4 to Tyr-379. 4-(4-benzylphenyl)thiazol-2-amine (ARM1) selectively inhibits the epoxide hydrolase activity. In terms of biological role, bifunctional zinc metalloenzyme that comprises both epoxide hydrolase (EH) and aminopeptidase activities. Acts as an epoxide hydrolase to catalyze the conversion of LTA4 to the pro-inflammatory mediator leukotriene B4 (LTB4). Also has aminopeptidase activity, with high affinity for N-terminal arginines of various synthetic tripeptides. In addition to its pro-inflammatory EH activity, may also counteract inflammation by its aminopeptidase activity, which inactivates by cleavage another neutrophil attractant, the tripeptide Pro-Gly-Pro (PGP), a bioactive fragment of collagen generated by the action of matrix metalloproteinase-9 (MMP9) and prolylendopeptidase (PREPL). Involved also in the biosynthesis of resolvin E1 and 18S-resolvin E1 from eicosapentaenoic acid, two lipid mediators that show potent anti-inflammatory and pro-resolving actions. The polypeptide is Leukotriene A-4 hydrolase (LTA4H) (Cavia porcellus (Guinea pig)).